The chain runs to 120 residues: NAD(P)H-quinone oxidoreductase subunit 3 (120 aa).

Helical transmembrane passes span Phe-10–Ile-30, Met-64–Val-84, and Leu-89–Ala-109.

It belongs to the complex I subunit 3 family. In terms of assembly, NDH-1 can be composed of about 15 different subunits; different subcomplexes with different compositions have been identified which probably have different functions.

Its subcellular location is the cellular thylakoid membrane. The enzyme catalyses a plastoquinone + NADH + (n+1) H(+)(in) = a plastoquinol + NAD(+) + n H(+)(out). It carries out the reaction a plastoquinone + NADPH + (n+1) H(+)(in) = a plastoquinol + NADP(+) + n H(+)(out). In terms of biological role, NDH-1 shuttles electrons from an unknown electron donor, via FMN and iron-sulfur (Fe-S) centers, to quinones in the respiratory and/or the photosynthetic chain. The immediate electron acceptor for the enzyme in this species is believed to be plastoquinone. Couples the redox reaction to proton translocation, and thus conserves the redox energy in a proton gradient. Cyanobacterial NDH-1 also plays a role in inorganic carbon-concentration. This is NAD(P)H-quinone oxidoreductase subunit 3 from Prochlorococcus marinus (strain AS9601).